The following is a 134-amino-acid chain: Small ribosomal subunit protein uS8c (134 aa).

This sequence belongs to the universal ribosomal protein uS8 family. In terms of assembly, part of the 30S ribosomal subunit.

Its subcellular location is the plastid. The protein resides in the chloroplast. One of the primary rRNA binding proteins, it binds directly to 16S rRNA central domain where it helps coordinate assembly of the platform of the 30S subunit. In Vitis vinifera (Grape), this protein is Small ribosomal subunit protein uS8c (rps8).